Reading from the N-terminus, the 261-residue chain is Syntaxin-7 (261 aa).

Serine 2 carries the N-acetylserine modification. Residues 2 to 238 (SYTPGVGGDP…DYQRKSRKTL (237 aa)) are Cytoplasmic-facing. Threonine 4 is subject to Phosphothreonine. A Phosphoserine modification is found at serine 45. A coiled-coil region spans residues 47–69 (ELRQQLQQKQQYTNQLTKETDKY). Serine 75 is modified (phosphoserine). Threonine 79 bears the Phosphothreonine mark. Serine 125, serine 126, serine 129, and serine 205 each carry phosphoserine. Residues 129-148 (SGSFPEDSSKERNLVSWESQ) are disordered. A t-SNARE coiled-coil homology domain is found at 165–227 (LRLIHERESS…QQANQQLSRA (63 aa)). A helical; Anchor for type IV membrane protein transmembrane segment spans residues 239–259 (CIIILILVIGVVIIGLIIWGL). Over 260-261 (NR) the chain is Vesicular.

The protein belongs to the syntaxin family. In terms of assembly, forms a SNARE complex with VTI1B, STX8 and VAMP8 which functions in the homotypic fusion of late endosomes. Component of the SNARE complex composed of STX7, STX8, VAMP7 and VTI1B that is required for heterotypic fusion of late endosomes with lysosomes. Interacts with VPS11, VPS16 and VPS18. Interacts with VPS33A. Interacts with TPC1.

The protein localises to the early endosome membrane. In terms of biological role, may be involved in protein trafficking from the plasma membrane to the early endosome (EE) as well as in homotypic fusion of endocytic organelles. Mediates the endocytic trafficking from early endosomes to late endosomes and lysosomes. This is Syntaxin-7 (STX7) from Pongo abelii (Sumatran orangutan).